We begin with the raw amino-acid sequence, 465 residues long: ATP synthase subunit beta (465 aa).

Residue 154–161 (GGAGVGKT) participates in ATP binding.

The protein belongs to the ATPase alpha/beta chains family. F-type ATPases have 2 components, CF(1) - the catalytic core - and CF(0) - the membrane proton channel. CF(1) has five subunits: alpha(3), beta(3), gamma(1), delta(1), epsilon(1). CF(0) has three main subunits: a(1), b(2) and c(9-12). The alpha and beta chains form an alternating ring which encloses part of the gamma chain. CF(1) is attached to CF(0) by a central stalk formed by the gamma and epsilon chains, while a peripheral stalk is formed by the delta and b chains.

It is found in the cell inner membrane. It catalyses the reaction ATP + H2O + 4 H(+)(in) = ADP + phosphate + 5 H(+)(out). Functionally, produces ATP from ADP in the presence of a proton gradient across the membrane. The catalytic sites are hosted primarily by the beta subunits. The sequence is that of ATP synthase subunit beta from Methylobacillus flagellatus (strain ATCC 51484 / DSM 6875 / VKM B-1610 / KT).